Consider the following 387-residue polypeptide: MKNVVIVDCLRTPMGRSKGGAFRHTRAEDLSAHLMKGILARNPQVNPSEIEDIYWGCVQQTLEQGFNVARNAALLAGLPIEIGAVTVNRLCGSSMQALHDGARAIMTGDAEICLIGGVEHMGHVPMNHGVDFHPGMSKHVAKAAGMMGLTAEMLGKLHGISREQQDEFAARSHARAHAATMEGRFKNEILPTEGHAADGTLFTLDHDEVIRPETTVEGLSQLRPVFDPANGTVTAGTSSALSDGASAMLIMSEEKANELGVTIRARIKGMAIAGCDPSIMGYGPVPATQKALKRAGLSIEDMDVIELNEAFAAQSLPCAKDLGLLDVMDEKVNLNGGAIALGHPLGCSGARISTTLINLMEAKDAKYGLATMCIGLGQGIATVFERP.

Cys-91 acts as the Acyl-thioester intermediate in catalysis. Active-site proton acceptor residues include His-343 and Cys-373.

This sequence belongs to the thiolase-like superfamily. Thiolase family. Heterotetramer of two alpha chains (FadB) and two beta chains (FadA).

It localises to the cytoplasm. The enzyme catalyses an acyl-CoA + acetyl-CoA = a 3-oxoacyl-CoA + CoA. It participates in lipid metabolism; fatty acid beta-oxidation. In terms of biological role, catalyzes the final step of fatty acid oxidation in which acetyl-CoA is released and the CoA ester of a fatty acid two carbons shorter is formed. This Vibrio vulnificus (strain CMCP6) protein is 3-ketoacyl-CoA thiolase.